The following is a 644-amino-acid chain: uncharacterized protein (644 aa).

The interval 65–117 (DSDVETTGGGGRGSTTSTEDRIDEHDDAIEDDGVSNEEDENQDAEQEQEVDLN) is disordered. Residues 89–114 (HDDAIEDDGVSNEEDENQDAEQEQEV) are compositionally biased toward acidic residues.

This is an uncharacterized protein from Arabidopsis thaliana (Mouse-ear cress).